A 482-amino-acid chain; its full sequence is Capsule synthesis positive regulator AcpB (482 aa).

PRD domains lie at 165–270 (PFEK…YKDI) and 283–395 (EGNL…YTSN).

This sequence belongs to the AtxA/AcpA family.

In terms of biological role, acpB and AcpA regulate cap gene expression and capsule synthesis. In Bacillus anthracis, this protein is Capsule synthesis positive regulator AcpB (acpB).